Reading from the N-terminus, the 259-residue chain is MYTKNFSNSRMEVKGNNGCSAPIIRKPFKHIVLTVPSSDLDNFNTVFYVQPQYINQALHLANAFQGAIDPLNLNFNFEKALQIANGIPNSAIVKTLNQSVIQQTVEISVMVEQLKKIIQEVLGLVINSTSFWNSVEATIKGTFTNLDTQIDEAWIFWHSLSAHNTSYYYNILFSIQNEDTGAVMAVLPLAFEVSVDVEKQKVLFFTIKDSARYEVKMKALTLVQALHSSNAPIVDIFNVNNYNLYHSNHKIIQNLNLSN.

The protein belongs to the cyt1/cyt2 endotoxin family. In terms of assembly, homodimer (protoxin) and monomer (active toxin). Post-translationally, active after proteolytic processing.

Functionally, kills the larvae of dipteran insects by making pores in the epithelial cell membrane of the insect midgut. The sequence is that of Type-2Aa cytolytic delta-endotoxin (cyt2Aa1) from Bacillus thuringiensis subsp. kyushuensis.